Reading from the N-terminus, the 408-residue chain is Acetate kinase (408 aa).

Asn-7 serves as a coordination point for Mg(2+). Lys-14 provides a ligand contact to ATP. Position 91 (Arg-91) interacts with substrate. The active-site Proton donor/acceptor is the Asp-148. Residues 208-212, 283-285, and 331-335 each bind ATP; these read HLGNG, DFR, and GIGEN. Glu-384 is a Mg(2+) binding site.

It belongs to the acetokinase family. In terms of assembly, homodimer. The cofactor is Mg(2+). Mn(2+) is required as a cofactor.

Its subcellular location is the cytoplasm. The enzyme catalyses acetate + ATP = acetyl phosphate + ADP. Its pathway is metabolic intermediate biosynthesis; acetyl-CoA biosynthesis; acetyl-CoA from acetate: step 1/2. Its function is as follows. Catalyzes the formation of acetyl phosphate from acetate and ATP. Can also catalyze the reverse reaction. The sequence is that of Acetate kinase from Methanosarcina mazei (strain ATCC BAA-159 / DSM 3647 / Goe1 / Go1 / JCM 11833 / OCM 88) (Methanosarcina frisia).